Here is an 88-residue protein sequence, read N- to C-terminus: Arminin 1a (88 aa).

An N-terminal signal peptide occupies residues 1-18; it reads MKTVLAFLFLPFIAFTHA. Residues 19–57 constitute a propeptide that is removed on maturation; the sequence is ESYEDVKEEIKNEAEKEIFEDLEEESDALDSSVREFNDA. Val85 is subject to Valine amide.

Belongs to the arminin family. As to expression, expressed in entodermal epithelium along the body column.

The protein localises to the secreted. Its subcellular location is the target cell membrane. In terms of biological role, antimicrobial peptide with a broad-spectrum antimicrobial activity. Shows very strong bactericidal activity against B.megaterium (MBC=0.1 uM), E.coli (MBC=0.2 uM), S.aureus (MBC=0.4 uM), methicillin-resistant S.aureus (MRSA) (MBC=0.4-0.8 uM), vancomycin-resistant enterococci (VRE) (E.faecalis (MBC=1.6 uM), and E.faecium (MBC=0.4-0.8 uM)), and extended-spectrum beta-lactamase (ESBL)-producing enterobacteriaceae strains (K.pneumoniae (MBC=0.4-0.8 uM), E.coli (MBC=0.2-0.4 uM)). Keeps its antibacterial activity under a wide range of salt concentrations that mimic physiological conditions of human blood, which is surprising, since Hydra is an obligate freshwater animal with nearly no salt tolerance. Does not affect red blood cells. The chain is Arminin 1a from Hydra vulgaris (Hydra).